A 68-amino-acid chain; its full sequence is Alpha-conotoxin-like Lt1.2 (68 aa).

Residues 1–21 form the signal peptide; the sequence is MGMRMMFIMFMLVVLATTVDT. The propeptide occupies 22 to 48; the sequence is FTSDRALDAMNAAASNKASRLIALAVR. Disulfide bonds link Cys-50–Cys-56 and Cys-51–Cys-64. The lacks the Ser-Xaa-Pro motif that is crucial for potent interaction with nAChR stretch occupies residues 52–54; sequence ARA. A Glycine amide modification is found at Gly-65.

It belongs to the conotoxin A superfamily. In terms of tissue distribution, expressed by the venom duct.

The protein resides in the secreted. Functionally, alpha-conotoxins act on postsynaptic membranes, they bind to the nicotinic acetylcholine receptors (nAChR) and thus inhibit them. Has a distinct nAChR binding mode from other alpha-conotoxins, due to a different three residue motif (Ala-Xaa-Ala instead of the conserved Ser-Xaa-Pro motif). This Conus litteratus (Lettered cone) protein is Alpha-conotoxin-like Lt1.2.